The chain runs to 346 residues: Upstream stimulatory factor 2 (346 aa).

Disordered stretches follow at residues 1 to 44 and 215 to 244; these read MDML…PGAE and APRT…NEVE. Residues 11–20 show a composition bias toward low complexity; the sequence is AASATAAAAA. Positions 226 to 244 are enriched in basic and acidic residues; the sequence is DGTRTPRDERRRAQHNEVE. The 56-residue stretch at 235 to 290 folds into the bHLH domain; sequence RRRAQHNEVERRRRDKINNWIVQLSKIIPDCNADNSKTGASKGGILSKACDYIREL. The segment at 307–328 is leucine-zipper; it reads LQMDNELLRQQIEELKNENALL.

As to quaternary structure, interacts with MAF. Efficient DNA binding requires dimerization with another bHLH protein. Binds DNA as a homodimer or a heterodimer (USF1/USF2). In vivo, the USF1/USF2A heterodimer represents over 66% of the usf binding activity whereas the USF1 and USF2A homodimers represent less than 10%. The USF1/USF2B heterodimer accounted for almost 15% in some cell. In terms of tissue distribution, ubiquitous.

It localises to the nucleus. In terms of biological role, transcription factor that binds to a symmetrical DNA sequence (E-boxes) (5'-CACGTG-3') that is found in a variety of viral and cellular promoters. The chain is Upstream stimulatory factor 2 (USF2) from Homo sapiens (Human).